A 369-amino-acid polypeptide reads, in one-letter code: MHIEKLELTNYRNYDQLEIAFDDQINVIIGENAQGKTNLMEAIYVLSFARSHRTPREKELIQWDKDYAKIEGRITKRNQSIPLQISITSKGKKAKVNHLEQHRLSDYIGSVNVVMFAPEDLTIVKGAPQIRRRFMDMELGQIQPTYIYHLAQYQKVLKQRNHLLKQLQRKPNSDTTMLEVLTDQLIEHASILLERRFIYLELLRKWAQPIHRGISRELEQLEIQYSPSIEVSEDANKEKIGNIYQMKFAEVKQKEIERGTTLAGPHRDDLIFFVNGKDVQTYGSQGQQRTTALSIKLAEIELIYQEVGEYPILLLDDVLSELDDYRQSHLLNTIQGKVQTFVSTTSVEGIHHETLQQAELFRVTDGVVN.

30–37 is a binding site for ATP; the sequence is GENAQGKT.

The protein belongs to the RecF family.

The protein resides in the cytoplasm. Its function is as follows. The RecF protein is involved in DNA metabolism; it is required for DNA replication and normal SOS inducibility. RecF binds preferentially to single-stranded, linear DNA. It also seems to bind ATP. The sequence is that of DNA replication and repair protein RecF from Oceanobacillus iheyensis (strain DSM 14371 / CIP 107618 / JCM 11309 / KCTC 3954 / HTE831).